Reading from the N-terminus, the 40-residue chain is Dolichyl-diphosphooligosaccharide--protein glycosyltransferase subunit 4 (40 aa).

The Lumenal portion of the chain corresponds to Met-1–Asp-4. Residues Val-5 to Tyr-25 traverse the membrane as a helical segment. Residues His-26 to Lys-40 lie on the Cytoplasmic side of the membrane.

The protein belongs to the OST4 family. Component of the oligosaccharyltransferase (OST) complex.

The protein resides in the endoplasmic reticulum membrane. Functionally, subunit of the oligosaccharyl transferase (OST) complex that catalyzes the initial transfer of a defined glycan (Glc(3)Man(9)GlcNAc(2) in eukaryotes) from the lipid carrier dolichol-pyrophosphate to an asparagine residue within an Asn-X-Ser/Thr consensus motif in nascent polypeptide chains, the first step in protein N-glycosylation. N-glycosylation occurs cotranslationally and the complex associates with the Sec61 complex at the channel-forming translocon complex that mediates protein translocation across the endoplasmic reticulum (ER). All subunits are required for a maximal enzyme activity. In Drosophila persimilis (Fruit fly), this protein is Dolichyl-diphosphooligosaccharide--protein glycosyltransferase subunit 4.